We begin with the raw amino-acid sequence, 556 residues long: Formate--tetrahydrofolate ligase (556 aa).

Residue 65 to 72 (TPAGEGKT) coordinates ATP.

This sequence belongs to the formate--tetrahydrofolate ligase family.

The enzyme catalyses (6S)-5,6,7,8-tetrahydrofolate + formate + ATP = (6R)-10-formyltetrahydrofolate + ADP + phosphate. The protein operates within one-carbon metabolism; tetrahydrofolate interconversion. In Lachnoclostridium phytofermentans (strain ATCC 700394 / DSM 18823 / ISDg) (Clostridium phytofermentans), this protein is Formate--tetrahydrofolate ligase.